The following is a 1101-amino-acid chain: Helicase POLQ-like (1101 aa).

Residues 212-261 (DLGDHSMKERDWKSSSHNTVNEELPHNCIEQPQQNDESSSKVRTSSDMNR) are disordered. A compositionally biased stretch (basic and acidic residues) spans 213–225 (LGDHSMKERDWKS). Positions 241–258 (EQPQQNDESSSKVRTSSD) are enriched in polar residues. In terms of domain architecture, Helicase ATP-binding spans 346-518 (LNSVQERKNL…FLQAEYYTSQ (173 aa)). ATP is bound at residue 359 to 366 (LPTSGGKT). Residues 463 to 466 (DELH) carry the DEAH box motif. Residues 566-758 (HLVALVTEVI…EFTKGIQTLF (193 aa)) enclose the Helicase C-terminal domain.

The protein belongs to the helicase family. SKI2 subfamily. As to quaternary structure, homodimer. Interacts with POLN. Interacts with RAD51B and RAD51C; promoting association with the BCDX2 complex. Interacts with the replication protein A (RPA/RP-A) complex. Interacts with RAD51; stimulating HELQ DNA helicase activity and ability to unwing DNA.

Its subcellular location is the nucleus. It is found in the chromosome. It catalyses the reaction Couples ATP hydrolysis with the unwinding of duplex DNA by translocating in the 3'-5' direction.. The catalysed reaction is ATP + H2O = ADP + phosphate + H(+). Its activity is regulated as follows. ATPase activity is strongly stimulated by single-stranded DNA. Presence of ATP and Mg cofactor are required for helicase activity allowing to unwind duplex oligonucleotides up to 60-70-mer. This helicase activity is stimulated by replication protein A (RPA/RP-A) complex that binds to unwound regions and inhibits re-annealing. Single-stranded 3'-5' DNA helicase that plays a key role in homology-driven double-strand break (DSB) repair. Involved in different DSB repair mechanisms that are guided by annealing of extensive stretches of complementary bases at break ends, such as microhomology-mediated end-joining (MMEJ), single-strand annealing (SSA) or synthesis-dependent strand annealing (SDSA). Possesses both DNA unwinding and annealing activities. Forms a complex with RAD51, stimulating HELQ DNA helicase activity and ability to unwing DNA. Efficiently unwinds substrates containing 3' overhangs or a D-loop. In contrast, interaction with the replication protein A (RPA/RP-A) complex inhibits DNA unwinding by HELQ but strongly stimulates DNA strand annealing. Triggers displacement of RPA from single-stranded DNA to facilitate annealing of complementary sequences. This chain is Helicase POLQ-like, found in Homo sapiens (Human).